Reading from the N-terminus, the 907-residue chain is MAGSSSSKEIVDAVEKWMAFPTSGGGGATAGLEIVAEDAPSGSSGAHQQQAWRPVAPATAGRDSGGTGSGKSSVDGGVGRASHDSLPRVSQELKDALSSLQQTFVVSDATRPDCPIIYASEGFFTMTGYSPREVVGRNCRFLQGPDTDAAEVAKIRDAVKHGRSFCGRLLNYRKDGAPFWNLLTVTPIRDDNGKVIKFIGMQVEVSKYTEGLSDKRMRPNELPVSLIRYDERQKDKAMSSMTEVVQTVKQPRGARAPADAALLTPPKMSDADKMAAMSPVVAPGTPSGGGGGAGSFKSPLWDLKKEESRLSRLASGRKSGRSSLMGFKIGKRSSVGSREAPAVVEEPAPAPPPAPEVVERTDSWERAEREKDIRQGIDLATTLERIEKNFVITDPRIPDNPIIFASDSFLELTEYTREEILGRNCRFLQGPETDQGTVDKIREAIREQKEITVQLINYTKSGKKFWNLFHLQPMRDQKGELQYFIGVQLDGSDHVEPLRNRLSENTEIQSAKLVKATAENVDDAVRELPDANLRPEDLWAIHSMRVSPKPHKRNNPSWIAIEKATNLGEKIGLKHFKPVKPLGCGDTGSVHLVELQGSGELFAMKAMDKSVMLNRNKVHRACIEREIYALLDHPFLPTLYTSFQTPTHVCLITDFCPGGELFAVLDRQPMKIFREECARFYAAEVVIGLEYLHCLGIIYRDLKPENILLQADGHIVLTDFDLSFLTTSKPHVIKNSTSLKRRRSQEFLPPTFVSEPSTPSNSFVGTEEYIAPEVITGAGHTSAIDWWALGILLYEMLYGRTPFRGKNRKKTFYNILHKDLTFPSSIPVSLAAKQLIHGLLQRDPSNRIGSNAGANDIKQHSFFQDINWPLIRCMSPPELDVPLKLIGKETQPKAKPDEDVPLNLDTF.

Residues 28–84 form a disordered region; that stretch reads ATAGLEIVAEDAPSGSSGAHQQQAWRPVAPATAGRDSGGTGSGKSSVDGGVGRASHD. Over residues 41 to 51 the composition is skewed to polar residues; the sequence is SGSSGAHQQQA. The region spanning 89–162 is the PAS 1 domain; sequence VSQELKDALS…AKIRDAVKHG (74 aa). Residues 138–143, R156, N171, N181, and Q202 contribute to the FMN site; that span reads NCRFLQ. S-4a-FMN cysteine is present on C139. The region spanning 163-217 is the PAC 1 domain; it reads RSFCGRLLNYRKDGAPFWNLLTVTPIRDDNGKVIKFIGMQVEVSKYTEGLSDKRM. The tract at residues 332-363 is disordered; that stretch reads RSSVGSREAPAVVEEPAPAPPPAPEVVERTDS. A PAS 2 domain is found at 375–448; the sequence is QGIDLATTLE…DKIREAIREQ (74 aa). FMN contacts are provided by residues 424-429, R442, N457, N467, and Q488; that span reads NCRFLQ. The residue at position 425 (C425) is an S-4a-FMN cysteine. The region spanning 449–503 is the PAC 2 domain; that stretch reads KEITVQLINYTKSGKKFWNLFHLQPMRDQKGELQYFIGVQLDGSDHVEPLRNRLS. The region spanning 576–863 is the Protein kinase domain; sequence FKPVKPLGCG…ANDIKQHSFF (288 aa). ATP contacts are provided by residues 582 to 590 and K605; that span reads LGCGDTGSV. The active-site Proton acceptor is the D701.

It belongs to the protein kinase superfamily. Ser/Thr protein kinase family. Homodimer. FMN serves as cofactor. Post-translationally, autophosphorylated in response to blue light irradiation. In terms of processing, 2 molecules of FMN bind covalently to cysteines after exposure to blue light and are reversed in the dark. As to expression, expressed at low levels in leaves of dark-grown seedlings.

It carries out the reaction L-seryl-[protein] + ATP = O-phospho-L-seryl-[protein] + ADP + H(+). The enzyme catalyses L-threonyl-[protein] + ATP = O-phospho-L-threonyl-[protein] + ADP + H(+). Protein kinase that acts as a blue light photoreceptor in a signal-transduction pathway for phototropic responses. Regulates a wide range of physiological activities in plants that maximize the efficiency of photosynthesis, such as chloroplast relocations, stomata opening, and leaf expansion. In Oryza sativa subsp. japonica (Rice), this protein is Phototropin-2 (PHOT2).